Reading from the N-terminus, the 95-residue chain is Large ribosomal subunit protein bL21 (95 aa).

It belongs to the bacterial ribosomal protein bL21 family. Part of the 50S ribosomal subunit. Contacts protein L20.

Its function is as follows. This protein binds to 23S rRNA in the presence of protein L20. This chain is Large ribosomal subunit protein bL21, found in Prosthecochloris vibrioformis (Chlorobium vibrioforme).